A 109-amino-acid polypeptide reads, in one-letter code: Flagellar hook-basal body complex protein FliE (109 aa).

This sequence belongs to the FliE family.

It is found in the bacterial flagellum basal body. This chain is Flagellar hook-basal body complex protein FliE, found in Pseudomonas fluorescens (strain Pf0-1).